A 310-amino-acid polypeptide reads, in one-letter code: uncharacterized protein (310 aa).

This is an uncharacterized protein from Acanthamoeba polyphaga (Amoeba).